The chain runs to 444 residues: Aflatoxin biosynthesis regulatory protein (444 aa).

Positions 1-26 (MVDHISPRASPGPIRSSQTRRARKLR) are disordered. The zn(2)-C6 fungal-type DNA-binding region spans 29–56 (CTSCASSKVRCTKEKPACARCIERGLAC). Positions 64–167 (MGRNPRAPSP…QGLGGDLAGQ (104 aa)) are disordered. Residues 106 to 116 (TQAHTHAHSHP) are compositionally biased toward basic residues. Over residues 120–130 (PQSHPQSNQPP) the composition is skewed to low complexity. Polar residues predominate over residues 136-149 (PNGSSSVSAIFSHQ).

As to quaternary structure, interacts with its co-regulator aflS.

It localises to the nucleus. It is found in the endosome. In terms of biological role, transcription factor involved in regulation of the aflatoxin biosynthesis gene cluster. Binds with its co-regulator aflS to AFLR1 elements (5'-TCGSWNNSCGR-3') present in the promoters of the aflatoxin cluster genes. The ratio of the expression data between aflS:aflR plays a crucial role in the regulation of aflatoxins production. A high ratio, produced at a range between 17 and 30 degrees Celsius, corresponds with the production profile of aflatoxin G1 biosynthesis. A low ratio, produced over 30 degrees Celsius, is related to aflatoxin B1 biosynthesis. The polypeptide is Aflatoxin biosynthesis regulatory protein (Aspergillus parasiticus (strain ATCC 56775 / NRRL 5862 / SRRC 143 / SU-1)).